We begin with the raw amino-acid sequence, 37 residues long: Glucagon-1 (37 aa).

It belongs to the glucagon family.

It is found in the secreted. Glucagon plays a key role in glucose metabolism and homeostasis. Regulates blood glucose by increasing gluconeogenesis and decreasing glycolysis. In Huso dauricus (Kaluga sturgeon), this protein is Glucagon-1.